A 161-amino-acid polypeptide reads, in one-letter code: Large-conductance mechanosensitive channel (161 aa).

2 helical membrane-spanning segments follow: residues 14–34 (VVDMAVGIIVGGAFGSIVNTL) and 85–105 (GLFLNALVSFTIMAFSVFILV).

It belongs to the MscL family. Homopentamer.

The protein resides in the cell inner membrane. Functionally, channel that opens in response to stretch forces in the membrane lipid bilayer. May participate in the regulation of osmotic pressure changes within the cell. The sequence is that of Large-conductance mechanosensitive channel from Chlorobium luteolum (strain DSM 273 / BCRC 81028 / 2530) (Pelodictyon luteolum).